The following is a 272-amino-acid chain: Phosphatidylglycerol--prolipoprotein diacylglyceryl transferase (272 aa).

The next 7 helical transmembrane spans lie at 17–37, 55–75, 90–110, 125–145, 174–194, 202–222, and 230–250; these read LQVH…WGLA, LVFY…VLFY, VWTG…AMLF, FIAP…FIGG, PSQI…LWWF, MAVS…MEFF, and GFIL…MLLI. Arg-138 contacts a 1,2-diacyl-sn-glycero-3-phospho-(1'-sn-glycerol).

The protein belongs to the Lgt family.

It localises to the cell inner membrane. The enzyme catalyses L-cysteinyl-[prolipoprotein] + a 1,2-diacyl-sn-glycero-3-phospho-(1'-sn-glycerol) = an S-1,2-diacyl-sn-glyceryl-L-cysteinyl-[prolipoprotein] + sn-glycerol 1-phosphate + H(+). The protein operates within protein modification; lipoprotein biosynthesis (diacylglyceryl transfer). In terms of biological role, catalyzes the transfer of the diacylglyceryl group from phosphatidylglycerol to the sulfhydryl group of the N-terminal cysteine of a prolipoprotein, the first step in the formation of mature lipoproteins. This Acinetobacter baumannii (strain ACICU) protein is Phosphatidylglycerol--prolipoprotein diacylglyceryl transferase.